Consider the following 468-residue polypeptide: MNLSLSDLHRQVSRLVQQESGDCTGKLRGNVAANKETTFQGLTIASGARESEKVFAQTVLSHVANIVLTQEDTAKLLQSTVKHNLNNYELRSVGNGNSVLVSLRSDQMTLQDAKVLLEAALRQESGARGHVSSHSHSVLHAPGTPVREGLRSHLDPRTPPLPPRERPHTSGHHGAGEARATAPSTVSPYGPEARAELSSRLTTLRNTLAPATNDPRYLQACGGEKLNRFRDIQCCRQTAVRADLNANYIQVGNTRTIACQYPLQSQLESHFRMLAENRTPVLAVLASSSEIANQRFGMPDYFRQSGTYGSITVESKMTQQVGLGDGIMADMYTLTIREAGQKTISVPVVHVGNWPDQTAVSSEVTKALASLVDQTAETKRNMYESKGSSAVADDSKLRPVIHCRAGVGRTAQLIGAMCMNDSRNSQLSVEDMVSQMRVQRNGIMVQKDEQLDVLIKLAEGQGRPLLNS.

Residues 127 to 194 (ARGHVSSHSH…TVSPYGPEAR (68 aa)) are disordered. The segment covering 130-140 (HVSSHSHSVLH) has biased composition (low complexity). Positions 152 to 461 (SHLDPRTPPL…DVLIKLAEGQ (310 aa)) constitute a Tyrosine-protein phosphatase domain. Cysteine 403 functions as the Phosphocysteine intermediate in the catalytic mechanism.

It belongs to the protein-tyrosine phosphatase family. Non-receptor class subfamily. In terms of assembly, monomer.

It is found in the secreted. It catalyses the reaction O-phospho-L-tyrosyl-[protein] + H2O = L-tyrosyl-[protein] + phosphate. Essential virulence determinant. This protein is a protein tyrosine phosphatase. The essential function of YopH in Yersinia pathogenesis is host-protein dephosphorylation. It contributes to the ability of the bacteria to resist phagocytosis by peritoneal macrophages. The protein is Tyrosine-protein phosphatase YopH (yopH) of Yersinia enterocolitica.